Consider the following 462-residue polypeptide: Argininosuccinate lyase (462 aa).

The protein belongs to the lyase 1 family. Argininosuccinate lyase subfamily.

It localises to the cytoplasm. The enzyme catalyses 2-(N(omega)-L-arginino)succinate = fumarate + L-arginine. It functions in the pathway amino-acid biosynthesis; L-arginine biosynthesis; L-arginine from L-ornithine and carbamoyl phosphate: step 3/3. In Prochlorococcus marinus (strain MIT 9211), this protein is Argininosuccinate lyase.